We begin with the raw amino-acid sequence, 510 residues long: Maturase K (510 aa).

This sequence belongs to the intron maturase 2 family. MatK subfamily.

It localises to the plastid. It is found in the chloroplast. Functionally, usually encoded in the trnK tRNA gene intron. Probably assists in splicing its own and other chloroplast group II introns. The sequence is that of Maturase K from Cestrum elegans (Red cestrum).